A 428-amino-acid chain; its full sequence is Histidine--tRNA ligase (428 aa).

Belongs to the class-II aminoacyl-tRNA synthetase family. Homodimer.

The protein localises to the cytoplasm. It catalyses the reaction tRNA(His) + L-histidine + ATP = L-histidyl-tRNA(His) + AMP + diphosphate + H(+). This chain is Histidine--tRNA ligase, found in Lactobacillus gasseri (strain ATCC 33323 / DSM 20243 / BCRC 14619 / CIP 102991 / JCM 1131 / KCTC 3163 / NCIMB 11718 / NCTC 13722 / AM63).